We begin with the raw amino-acid sequence, 237 residues long: Uridylate kinase (237 aa).

12 to 15 (KLSG) provides a ligand contact to ATP. The involved in allosteric activation by GTP stretch occupies residues 20-25 (GEDGLG). Gly-54 contributes to the UMP binding site. 2 residues coordinate ATP: Gly-55 and Arg-59. UMP is bound by residues Asp-74 and 135-142 (TGNPFFTT). ATP contacts are provided by Thr-162, Tyr-168, and Asp-171.

It belongs to the UMP kinase family. In terms of assembly, homohexamer.

The protein localises to the cytoplasm. The enzyme catalyses UMP + ATP = UDP + ADP. The protein operates within pyrimidine metabolism; CTP biosynthesis via de novo pathway; UDP from UMP (UMPK route): step 1/1. Its activity is regulated as follows. Allosterically activated by GTP. Inhibited by UTP. In terms of biological role, catalyzes the reversible phosphorylation of UMP to UDP. The polypeptide is Uridylate kinase (Haemophilus influenzae (strain 86-028NP)).